The sequence spans 138 residues: Large ribosomal subunit protein uL16 (138 aa).

Over residues 1–13 the composition is skewed to basic residues; the sequence is MLQPSRRKYRKEQ. The interval 1–20 is disordered; sequence MLQPSRRKYRKEQKGRNTGL.

The protein belongs to the universal ribosomal protein uL16 family. Part of the 50S ribosomal subunit.

Binds 23S rRNA and is also seen to make contacts with the A and possibly P site tRNAs. This is Large ribosomal subunit protein uL16 from Bordetella avium (strain 197N).